Consider the following 160-residue polypeptide: Transcription antitermination protein NusB (160 aa).

Belongs to the NusB family.

Its function is as follows. Involved in transcription antitermination. Required for transcription of ribosomal RNA (rRNA) genes. Binds specifically to the boxA antiterminator sequence of the ribosomal RNA (rrn) operons. The protein is Transcription antitermination protein NusB of Rhizobium leguminosarum bv. trifolii (strain WSM2304).